Consider the following 24-residue polypeptide: Metallothionein (24 aa).

7 residues coordinate Cd(2+): Cys-3, Cys-5, Cys-8, Cys-10, Cys-17, Cys-19, and Cys-22.

The protein belongs to the metallothionein superfamily. Type 8 family. Post-translationally, contains 4 disulfide bonds.

Metallothioneins have a high content of cysteine residues that bind various heavy metals. The sequence is that of Metallothionein from Neonectria lugdunensis (Aquatic fungus).